Here is a 287-residue protein sequence, read N- to C-terminus: MAGKTVTNGAAQGKAARSGADGAVRGKAGMGRVDLIGAGPGDPELLTLRALRLLQQADVVVHDRLVSDEVMACIPAHVRRIPVGKAAGFHPVPQEQINALLVELGLSGLTVARLKGGDPTIFGRGGEEFEAVTRAGIPCDYVPGITAAQGAAVSARFPLTHRGLATGLRHVTGHRARDAALDLDWASLADPQTTLAIYMGAANMAEIARELIRHGMPADLPVLAVSQASTPQEQRLHATLQDIAAALARKPLPAPVLFIVGHVAAMAEDCALPQELYRPEWRLVAHG.

Residues 1-10 (MAGKTVTNGA) are compositionally biased toward polar residues. The interval 1-24 (MAGKTVTNGAAQGKAARSGADGAV) is disordered. S-adenosyl-L-methionine contacts are provided by residues Pro40, 116–118 (GGD), Thr146, and Met199.

Belongs to the precorrin methyltransferase family.

It catalyses the reaction uroporphyrinogen III + 2 S-adenosyl-L-methionine = precorrin-2 + 2 S-adenosyl-L-homocysteine + H(+). The protein operates within porphyrin-containing compound metabolism; siroheme biosynthesis; precorrin-2 from uroporphyrinogen III: step 1/1. Functionally, catalyzes the methylation of both C-2 and C-7 of uroporphyrinogen III leading to precorrin-1 and precorrin-2; their oxidative esterification gives respectively factor I octamethyl ester and sirohydrochlorin. Inactivation of uroporphyrinogen-III methyltransferase results in the loss of nitrite and nitric oxide reductase activities, but not of nitrous oxide reductase activity. Likely involved in heme D1 biosynthesis. The chain is Uroporphyrinogen-III C-methyltransferase (nirE) from Paracoccus denitrificans (strain Pd 1222).